Here is a 297-residue protein sequence, read N- to C-terminus: Pyridoxal 5'-phosphate synthase subunit PdxS (297 aa).

Residue D27 coordinates D-ribose 5-phosphate. The active-site Schiff-base intermediate with D-ribose 5-phosphate is K84. G156 is a binding site for D-ribose 5-phosphate. Position 168 (R168) interacts with D-glyceraldehyde 3-phosphate. Residues G217 and 238–239 (GS) each bind D-ribose 5-phosphate.

This sequence belongs to the PdxS/SNZ family. In the presence of PdxT, forms a dodecamer of heterodimers.

It carries out the reaction aldehydo-D-ribose 5-phosphate + D-glyceraldehyde 3-phosphate + L-glutamine = pyridoxal 5'-phosphate + L-glutamate + phosphate + 3 H2O + H(+). It participates in cofactor biosynthesis; pyridoxal 5'-phosphate biosynthesis. Catalyzes the formation of pyridoxal 5'-phosphate from ribose 5-phosphate (RBP), glyceraldehyde 3-phosphate (G3P) and ammonia. The ammonia is provided by the PdxT subunit. Can also use ribulose 5-phosphate and dihydroxyacetone phosphate as substrates, resulting from enzyme-catalyzed isomerization of RBP and G3P, respectively. This is Pyridoxal 5'-phosphate synthase subunit PdxS from Corynebacterium efficiens (strain DSM 44549 / YS-314 / AJ 12310 / JCM 11189 / NBRC 100395).